An 84-amino-acid chain; its full sequence is ATPase-stabilizing factor 15 kDa protein (84 aa).

Over residues 1 to 18 (MTRTNKWTEREGKADPKY) the composition is skewed to basic and acidic residues. A disordered region spans residues 1–84 (MTRTNKWTER…EQKFENVQKE (84 aa)). A phosphoserine mark is found at Ser28 and Ser69. The span at 74-84 (HEQKFENVQKE) shows a compositional bias: basic and acidic residues.

This sequence belongs to the STF2 family.

It localises to the mitochondrion. The protein resides in the cytoplasm. In terms of biological role, found to stabilize, together with STF1, a complex of intrinsic ATPase inhibitor INH1 and proton-translocating ATPase (F(1)F(0)-ATPase) in mitochondrial membranes. Binds to the F0 part and may function to hold the ATPase inhibitor or STF1 on the F1 subunit. Also acts as a hydrophilins that enhances dry stress tolerance. Cell viability after desiccation and rehydration is due to the antioxidant capacity of the protein, which reduces the number of apoptotic cells during stress conditions by minimising the accumulation of reactive oxygen species (ROS) in the cells. The sequence is that of ATPase-stabilizing factor 15 kDa protein (STF2) from Saccharomyces cerevisiae (strain ATCC 204508 / S288c) (Baker's yeast).